The primary structure comprises 645 residues: Threonine--tRNA ligase (645 aa).

The TGS domain occupies Met1–Thr61. The tract at residues Asp243 to Pro534 is catalytic. Zn(2+) is bound by residues Cys334, His385, and His511.

This sequence belongs to the class-II aminoacyl-tRNA synthetase family. In terms of assembly, homodimer. The cofactor is Zn(2+).

The protein resides in the cytoplasm. The catalysed reaction is tRNA(Thr) + L-threonine + ATP = L-threonyl-tRNA(Thr) + AMP + diphosphate + H(+). Functionally, catalyzes the attachment of threonine to tRNA(Thr) in a two-step reaction: L-threonine is first activated by ATP to form Thr-AMP and then transferred to the acceptor end of tRNA(Thr). Also edits incorrectly charged L-seryl-tRNA(Thr). This is Threonine--tRNA ligase from Marinomonas sp. (strain MWYL1).